A 391-amino-acid chain; its full sequence is MALSTSRAINHIMKPLSAAVCATRRLSSDSTATITVETSLPFTSHNIDPPSRSVETSPKELMTFFKDMTEMRRMEIAADSLYKAKLIRGFCHLYDGQEAVAVGMEAAITKKDCIITAYRDHCIFLGRGGTLVEAFAELMGRRDGCSRGKGGSMHFYKKESGFYGGHGIVGAQVPLGIGLAFAQKYKKEDYVTFAMYGDGAANQGQLFEALNMAALWDLPAILVCENNHYGMGTAEWRAAKSPAYYKRGDYVPGLRVDGMDVFAVKQACTFAKQHALKNGPIILEMDTYRYHGHSMSDPGSTYRTRDEISGVRQERDPVERIRSLILAHNIATEAELKDIEKENRKVVDEAIAKAKESPMPDPSELFTNVYVKGFGVEAYGADRKELRATLP.

Residues 1–26 (MALSTSRAINHIMKPLSAAVCATRRL) constitute a mitochondrion transit peptide. The pyruvate site is built by His92, Tyr118, Arg119, Gly167, Val169, Asp198, Gly199, Ala200, Asn227, and Tyr229. Residues Tyr118, Arg119, Gly167, Val169, Asp198, Gly199, Ala200, and Asn227 each contribute to the thiamine diphosphate site. Asp198 is a Mg(2+) binding site. Positions 227 and 229 each coordinate Mg(2+). Residue His293 coordinates thiamine diphosphate. The tract at residues 294–313 (SMSDPGSTYRTRDEISGVRQ) is disordered. The segment covering 303-313 (RTRDEISGVRQ) has biased composition (basic and acidic residues).

In terms of assembly, tetramer of 2 alpha and 2 beta subunits. Thiamine diphosphate serves as cofactor. The cofactor is Mg(2+).

It is found in the mitochondrion matrix. The catalysed reaction is N(6)-[(R)-lipoyl]-L-lysyl-[protein] + pyruvate + H(+) = N(6)-[(R)-S(8)-acetyldihydrolipoyl]-L-lysyl-[protein] + CO2. With respect to regulation, E1 activity is regulated by phosphorylation (inactivation) and dephosphorylation (activation) of the alpha subunit. In terms of biological role, the pyruvate dehydrogenase complex catalyzes the overall conversion of pyruvate to acetyl-CoA and CO(2). It contains multiple copies of three enzymatic components: pyruvate dehydrogenase (E1), dihydrolipoamide acetyltransferase (E2) and lipoamide dehydrogenase (E3). The chain is Pyruvate dehydrogenase E1 component subunit alpha, mitochondrial from Solanum tuberosum (Potato).